Reading from the N-terminus, the 87-residue chain is UPF0250 protein plu1293 (87 aa).

The protein belongs to the UPF0250 family.

The polypeptide is UPF0250 protein plu1293 (Photorhabdus laumondii subsp. laumondii (strain DSM 15139 / CIP 105565 / TT01) (Photorhabdus luminescens subsp. laumondii)).